We begin with the raw amino-acid sequence, 275 residues long: MVGANIYNTHNIHDPNNLNNLNNINNPNNITNNMHNPHNIFQNNYFDPKQLKILVDNMTPQDLELLLTLSCKKGIIRDVEYILCRIMREMINININYGLCQAIENYHLKIVELLIDHGADINYNNGLPLNLAVKNGYYDIIELLIEKKVNTNDNIFQLLTHCCQNNLPNSLRILLKENISIDPIYSTMVNLCLDNGYAECASILINHNNSDSTINSESMIHDTNLTTSQTLLELDDLLELDDLLDGNDYFNYNQDESDVGDDAENDIENDIEDDN.

ANK repeat units lie at residues 94–123 (NINY…DINY), 124–153 (NNGL…NTND), 155–183 (IFQL…SIDP), and 184–213 (IYST…SDST). A disordered region spans residues 253–275 (NQDESDVGDDAENDIENDIEDDN). The span at 255–275 (DESDVGDDAENDIENDIEDDN) shows a compositional bias: acidic residues.

The chain is Putative ankyrin repeat protein L715 from Acanthamoeba polyphaga mimivirus (APMV).